Consider the following 144-residue polypeptide: Maximins 4/H3 type 2 (144 aa).

An N-terminal signal peptide occupies residues 1–18 (MNFKYIIAVSFFIASAYA). The propeptide occupies 19–43 (RRNEKDVQSLSQRDVLEEESLREIR). Asparagine amide is present on Asn-70. Positions 74–123 (TAEDHEVMKRLEAVMRDLDSLDHPEEASERETRGFNQEEIANLFTKKEKR) are excised as a propeptide. Ile-143 carries the isoleucine amide modification.

Belongs to the bombinin family. As to expression, expressed by the skin glands.

The protein resides in the secreted. In terms of biological role, maximin-4 shows antibacterial activity against both Gram-positive and Gram-negative bacteria. It also shows antimicrobial activity against the fungus C.albicans, but not against A.flavus nor P.uticale. It has little hemolytic activity. It does not possess a significant cytotoxicity against tumor cell lines. It does not possess a significant anti-HIV activity. Functionally, maximin-H3 shows antibacterial activity against both Gram-positive and Gram-negative bacteria. It also shows antimicrobial activity against the fungus C.albicans. Shows strong hemolytic activity. This Bombina maxima (Giant fire-bellied toad) protein is Maximins 4/H3 type 2.